The sequence spans 444 residues: CCA-adding enzyme (444 aa).

ATP-binding residues include Ser-57 and Arg-60. The CTP site is built by Ser-57 and Arg-60. Mg(2+)-binding residues include Asp-69, Asp-71, and Asp-124. ATP is bound by residues His-147, Lys-168, and Tyr-177. CTP-binding residues include His-147, Lys-168, and Tyr-177.

The protein belongs to the tRNA nucleotidyltransferase/poly(A) polymerase family. Archaeal CCA-adding enzyme subfamily. As to quaternary structure, homodimer. Mg(2+) serves as cofactor.

It carries out the reaction a tRNA precursor + 2 CTP + ATP = a tRNA with a 3' CCA end + 3 diphosphate. The enzyme catalyses a tRNA with a 3' CCA end + 2 CTP + ATP = a tRNA with a 3' CCACCA end + 3 diphosphate. In terms of biological role, catalyzes the addition and repair of the essential 3'-terminal CCA sequence in tRNAs without using a nucleic acid template. Adds these three nucleotides in the order of C, C, and A to the tRNA nucleotide-73, using CTP and ATP as substrates and producing inorganic pyrophosphate. tRNA 3'-terminal CCA addition is required both for tRNA processing and repair. Also involved in tRNA surveillance by mediating tandem CCA addition to generate a CCACCA at the 3' terminus of unstable tRNAs. While stable tRNAs receive only 3'-terminal CCA, unstable tRNAs are marked with CCACCA and rapidly degraded. The protein is CCA-adding enzyme of Methanococcus maripaludis (strain C5 / ATCC BAA-1333).